The chain runs to 283 residues: Pantothenate synthetase (283 aa).

Residue 30–37 (MGALHEGH) participates in ATP binding. His-37 (proton donor) is an active-site residue. Gln-61 is a binding site for (R)-pantoate. Position 61 (Gln-61) interacts with beta-alanine. An ATP-binding site is contributed by 147–150 (GEKD). Gln-153 is a binding site for (R)-pantoate. Residues Ile-176 and 184-187 (VSSR) each bind ATP.

Belongs to the pantothenate synthetase family. As to quaternary structure, homodimer.

The protein resides in the cytoplasm. It catalyses the reaction (R)-pantoate + beta-alanine + ATP = (R)-pantothenate + AMP + diphosphate + H(+). It participates in cofactor biosynthesis; (R)-pantothenate biosynthesis; (R)-pantothenate from (R)-pantoate and beta-alanine: step 1/1. Functionally, catalyzes the condensation of pantoate with beta-alanine in an ATP-dependent reaction via a pantoyl-adenylate intermediate. The protein is Pantothenate synthetase of Chlorobium phaeobacteroides (strain DSM 266 / SMG 266 / 2430).